Reading from the N-terminus, the 485-residue chain is E3 ubiquitin-protein ligase TRIM68 (485 aa).

The RING-type zinc-finger motif lies at 16–61 (CPICMTFLREPMSIDCGHSFCHSCLSGLWEIPGESQNWGYTCPLCR). The segment at 93 to 134 (LKGDLCERHGEKLKMFCKEDVLIMCEACSQSPEHEAHSVVPM) adopts a B box-type zinc-finger fold. Residues cysteine 98, histidine 101, cysteine 120, and histidine 126 each coordinate Zn(2+). Residues 207–239 (AEVAAALASLQREAAETMQKLELNHSELIQQSQ) are a coiled coil. Residues 285–481 (LKTDCRVLGL…NTAPLAICSL (197 aa)) form the B30.2/SPRY domain.

This sequence belongs to the TRIM/RBCC family. As to quaternary structure, interacts with AR/androgen receptor (via ligand-binding domain). Interacts with KAT5/TIP60. Auto-ubiquitinated. As to expression, widely expressed. Expressed at high levels in prostate cancer cell lines. Up-regulation could be restricted to androgen-dependent cells.

It localises to the cytoplasm. Its subcellular location is the perinuclear region. It is found in the nucleus. It catalyses the reaction S-ubiquitinyl-[E2 ubiquitin-conjugating enzyme]-L-cysteine + [acceptor protein]-L-lysine = [E2 ubiquitin-conjugating enzyme]-L-cysteine + N(6)-ubiquitinyl-[acceptor protein]-L-lysine.. The protein operates within protein modification; protein ubiquitination. In terms of biological role, functions as a ubiquitin E3 ligase. Acts as a coactivator of androgen receptor (AR) depending on its ubiquitin ligase activity. This is E3 ubiquitin-protein ligase TRIM68 (TRIM68) from Homo sapiens (Human).